An 869-amino-acid polypeptide reads, in one-letter code: Dynamin-3 (869 aa).

Residues 28–294 (LLELPQIAVV…LTNHIRDTLP (267 aa)) form the Dynamin-type G domain. A G1 motif region spans residues 38–45 (GGQSAGKS). 38–46 (GGQSAGKSS) serves as a coordination point for GTP. The tract at residues 64-66 (VTR) is G2 motif. Residues 136–139 (DLPG) are G3 motif. The interval 205 to 208 (TKLD) is G4 motif. Residue 205 to 211 (TKLDLMD) coordinates GTP. Position 231 is a phosphotyrosine (Tyr-231). Residues 235–238 (VNRS) form a G5 motif region. 236–239 (NRSQ) is a binding site for GTP. Lys-299 carries the N6-acetyllysine modification. The PH domain maps to 515–621 (QGTNLPPSRQ…ACDSQEDVDS (107 aa)). Tyr-603 is subject to Phosphotyrosine. Lys-604 is modified (N6-acetyllysine). The GED domain maps to 659–750 (VETIRNLVDS…IIGDISTATV (92 aa)). The segment at 747–869 (TATVSTPAPP…IRPLESSLLD (123 aa)) is disordered. Phosphoserine is present on residues Ser-769 and Ser-773. Composition is skewed to pro residues over residues 797 to 822 (PAIPSPGPHSGAPPVPFRPGPLPPFP) and 832 to 855 (PQVPSRPTRAPPSVPSRRPPPSPT). Ser-853 carries the post-translational modification Phosphoserine.

Belongs to the TRAFAC class dynamin-like GTPase superfamily. Dynamin/Fzo/YdjA family.

The protein resides in the cytoplasm. It is found in the cytoskeleton. It carries out the reaction GTP + H2O = GDP + phosphate + H(+). In terms of biological role, microtubule-associated force-producing protein involved in producing microtubule bundles and able to bind and hydrolyze GTP. Most probably involved in vesicular trafficking processes, in particular endocytosis. The protein is Dynamin-3 (DNM3) of Homo sapiens (Human).